We begin with the raw amino-acid sequence, 455 residues long: Ribosome biogenesis protein NOP53 (455 aa).

Residues Met1–Gln15 show a composition bias toward polar residues. Residues Met1–Arg25 form a disordered region. Basic residues predominate over residues Ser16–Arg25. Phosphoserine is present on Ser31. The disordered stretch occupies residues His264 to Lys333. A compositionally biased stretch (acidic residues) spans Thr268–Asn294. Residues Val314–Lys328 show a composition bias toward basic residues.

Belongs to the NOP53 family. Interacts with CBF5, FPR3, FPR4, NOP2, PIH1, RRN3, RRP6 and PAP2. Interacts with pre-60S ribosomal particles.

Its subcellular location is the nucleus. It is found in the nucleolus. It localises to the nucleoplasm. Its function is as follows. Late-acting factor in the nuclear maturation of 60S ribosomal subunits, which is required for normal acquisition of export competence. Required for the export of the large subunit. Acts to stimulate the RNase activity of the exosome complex, and may recruit the exosome to 7S pre-rRNA for processing. Associates with numerous RNAs including the 27S and 7S pre-rRNAs and the box H/ACA snoRNA snR37. Also interacts (via N-terminal region) with the mature 25S rRNA and the mature 5.8S rRNA. This is Ribosome biogenesis protein NOP53 from Saccharomyces cerevisiae (strain ATCC 204508 / S288c) (Baker's yeast).